A 113-amino-acid chain; its full sequence is Cell cycle control protein 50C (113 aa).

Topologically, residues 1–34 (MEERAQHCLSRLLDNSALKQQELPIHRLYFTARR) are cytoplasmic. Residues 35-55 (VLFVFFATGIFCLCMGIILIL) form a helical membrane-spanning segment. At 56 to 113 (SARSTQEIEINYTRICANCAKLRENASNFDKECTCSIPFYLSGKMMVGEIQETRLTLH) the chain is on the extracellular side. Asn-66 is a glycosylation site (N-linked (GlcNAc...) asparagine).

It belongs to the CDC50/LEM3 family. As to expression, specifically expressed in testis.

Its subcellular location is the membrane. The chain is Cell cycle control protein 50C from Homo sapiens (Human).